Here is a 583-residue protein sequence, read N- to C-terminus: Trehalase (583 aa).

The first 23 residues, Met-1–Ala-23, serve as a signal peptide directing secretion. Asn-78 carries N-linked (GlcNAc...) asparagine glycosylation. Substrate is bound by residues Arg-168, Trp-175–Asp-176, Asn-212, and Arg-221–Gln-223. Residues Asn-239 and Asn-261 are each glycosylated (N-linked (GlcNAc...) asparagine). Residues Arg-286–Glu-288 and Gly-319 contribute to the substrate site. The active-site Proton donor/acceptor is the Asp-321. A glycan (N-linked (GlcNAc...) asparagine) is linked at Asn-369. The active-site Proton donor/acceptor is Glu-514. Position 529 (Glu-529) interacts with substrate. A lipid anchor (GPI-anchor amidated serine) is attached at Ser-556. Positions Gly-557–Trp-583 are cleaved as a propeptide — removed in mature form.

It belongs to the glycosyl hydrolase 37 family. In terms of assembly, homodimer; disulfide-linked. As to expression, expressed in kidney, liver and small intestine. Also more weakly expressed in pancreas.

The protein localises to the cell membrane. It carries out the reaction alpha,alpha-trehalose + H2O = alpha-D-glucose + beta-D-glucose. Its function is as follows. Intestinal trehalase is probably involved in the hydrolysis of ingested trehalose. This is Trehalase from Homo sapiens (Human).